We begin with the raw amino-acid sequence, 94 residues long: ESAT-6-like protein EsxL (94 aa).

This sequence belongs to the WXG100 family. ESAT-6 subfamily. As to quaternary structure, strongly interacts with EsxK to form a heterodimeric complex under reducing conditions.

It localises to the secreted. The sequence is that of ESAT-6-like protein EsxL from Mycobacterium tuberculosis (strain CDC 1551 / Oshkosh).